The following is a 402-amino-acid chain: Rubredoxin-oxygen oxidoreductase (402 aa).

The zinc metallo-hydrolase stretch occupies residues 30 to 216 (PMGTTYNAYL…KAIETLVGAG (187 aa)). 6 residues coordinate Fe cation: histidine 79, glutamate 81, aspartate 83, histidine 146, aspartate 165, and histidine 226. Positions 255-393 (VVIFYDSMWH…QLKTMAQTIA (139 aa)) constitute a Flavodoxin-like domain.

In the N-terminal section; belongs to the zinc metallo-hydrolase group 3 family. In terms of assembly, homodimer. FMN is required as a cofactor. Fe cation serves as cofactor.

It participates in energy metabolism; electron transfer. In terms of biological role, catalyzes the four-electron reduction of one oxygen molecule to two water molecules. The sequence is that of Rubredoxin-oxygen oxidoreductase (roo) from Megalodesulfovibrio gigas (strain ATCC 19364 / DSM 1382 / NCIMB 9332 / VKM B-1759) (Desulfovibrio gigas).